Reading from the N-terminus, the 1178-residue chain is DNA-directed RNA polymerase subunit beta' (1178 aa).

Cysteine 60, cysteine 62, cysteine 75, and cysteine 78 together coordinate Zn(2+). 3 residues coordinate Mg(2+): aspartate 450, aspartate 452, and aspartate 454. Zn(2+) contacts are provided by cysteine 795, cysteine 869, cysteine 876, and cysteine 879.

Belongs to the RNA polymerase beta' chain family. In terms of assembly, the RNAP catalytic core consists of 2 alpha, 1 beta, 1 beta' and 1 omega subunit. When a sigma factor is associated with the core the holoenzyme is formed, which can initiate transcription. Requires Mg(2+) as cofactor. The cofactor is Zn(2+).

The enzyme catalyses RNA(n) + a ribonucleoside 5'-triphosphate = RNA(n+1) + diphosphate. Its function is as follows. DNA-dependent RNA polymerase catalyzes the transcription of DNA into RNA using the four ribonucleoside triphosphates as substrates. This Clostridium botulinum (strain Langeland / NCTC 10281 / Type F) protein is DNA-directed RNA polymerase subunit beta'.